A 348-amino-acid polypeptide reads, in one-letter code: Probable protein phosphatase 2C 35 (348 aa).

The segment covering 11-24 has biased composition (low complexity); sequence RYPSSSSDGDSRGP. Residues 11–40 form a disordered region; the sequence is RYPSSSSDGDSRGPLEANGVLKGKDQKPLG. The PPM-type phosphatase domain occupies 52-342; the sequence is VYSVLSQRGY…DDITIIIVQI (291 aa). 4 residues coordinate Mn(2+): Asp-93, Gly-94, Asp-289, and Asp-333.

It belongs to the PP2C family. Mg(2+) serves as cofactor. It depends on Mn(2+) as a cofactor.

It carries out the reaction O-phospho-L-seryl-[protein] + H2O = L-seryl-[protein] + phosphate. The catalysed reaction is O-phospho-L-threonyl-[protein] + H2O = L-threonyl-[protein] + phosphate. This Arabidopsis thaliana (Mouse-ear cress) protein is Probable protein phosphatase 2C 35.